Reading from the N-terminus, the 806-residue chain is N-terminal kinase-like protein (806 aa).

The region spanning 14-314 (FELSPEPPEG…PEDFCRHKVL (301 aa)) is the Protein kinase domain. HEAT repeat units follow at residues 350 to 388 (IIPVVVKMFSSTDRAMRIRLLQQMEQFIQYLDEPTVNTQ), 389 to 427 (IFPHVTHGFLDTNPAIREQTVKSMLLLAPKLNEANLNVE), and 507 to 545 (ILPVLCGLTVDPEKSVRDQAFKTIRSFLSKLESVSEDPT). 2 disordered regions span residues 586–642 (RAHP…TADR) and 663–806 (DDWS…RKLD). Residues 601–611 (RPVPEGNPAPA) are compositionally biased toward pro residues. S752 is subject to Phosphoserine. Over residues 752–762 (SWGEDNWEGLE) the composition is skewed to acidic residues. The stretch at 755 to 795 (EDNWEGLEAESRQVKAELARKKREERRREMEAKRAEKKTTK) forms a coiled coil. 2 stretches are compositionally biased toward basic and acidic residues: residues 763 to 773 (AESRQVKAELA) and 780 to 793 (RRREMEAKRAEKKT). The interaction with COPB1 stretch occupies residues 791 to 806 (KKTTKGPMKLGARKLD).

Belongs to the protein kinase superfamily. Homooligomer. Interacts with GORAB. Interacts with COPA, COPB1 and COPB2. Interacts with AP2B1. In terms of tissue distribution, expressed in diaphragm, quadriceps, thymus, liver, lung, spleen, kidney, heart and brain. Prominently expressed in neurons, and enriched at central nervous system synapses and neuromuscular junctions.

It is found in the cytoplasm. The protein resides in the cytoskeleton. It localises to the microtubule organizing center. The protein localises to the centrosome. Its subcellular location is the endoplasmic reticulum-Golgi intermediate compartment. It is found in the golgi apparatus. The protein resides in the cis-Golgi network. In terms of biological role, regulates COPI-mediated retrograde protein traffic at the interface between the Golgi apparatus and the endoplasmic reticulum. Involved in the maintenance of the Golgi apparatus morphology. The chain is N-terminal kinase-like protein (Scyl1) from Mus musculus (Mouse).